The chain runs to 552 residues: MAAKEVKFGDSARKKMLVGVNVLADAVKATLGPKGRNVVLEKSFGAPTITKDGVSVAKEIELKDRFENMGAQLVKDVASKANDEAGDGTTTATVLAQAIVNEGLKAVAAGMNPMDLKRGIDKATIAIVAELKNLAKPCTDSKAIAQVGTISANSDSSIGDIIAEAMERVGKEGVITVEEGSGLENELSVVEGMQFDRGYLSPYFINKPDTMVAELDSPLLLLVDKKISNIRELLPVLEAVAKAGRPLLIVAEDVEGEALATLVVNNMRGIVKVAAVKAPGFGDRRKAMLQDIAILTGGTVISEEVGLSLETATLEHLGNAKRVVLNKENTTIIDGAGQQADIEARVAQIRKQVEDTTSDYDKEKLQERLAKLAGGVAVIKVGAGTEVEMKEKKARVEDALHATRAAVEEGVVPGGGVAWVRALQAISELKGENEDQNVGIALLRRAVEAPLRQIVTNAGGEPSVVVDKVKQGEGNYGFNAASDTYGDMIEMGILDPAKVTRSALQAAASIGSLMITTEAMIAEVAEDKAAGGMPDMGGMGGMGGMGGMGGMM.

Residues 30–33 (TLGP), lysine 51, 87–91 (DGTTT), glycine 415, 479–481 (NAA), and aspartate 495 contribute to the ATP site.

It belongs to the chaperonin (HSP60) family. In terms of assembly, forms a cylinder of 14 subunits composed of two heptameric rings stacked back-to-back. Interacts with the co-chaperonin GroES.

It localises to the cytoplasm. It catalyses the reaction ATP + H2O + a folded polypeptide = ADP + phosphate + an unfolded polypeptide.. Functionally, together with its co-chaperonin GroES, plays an essential role in assisting protein folding. The GroEL-GroES system forms a nano-cage that allows encapsulation of the non-native substrate proteins and provides a physical environment optimized to promote and accelerate protein folding. The protein is Chaperonin GroEL of Stutzerimonas stutzeri (Pseudomonas stutzeri).